Here is a 118-residue protein sequence, read N- to C-terminus: Large ribosomal subunit protein uL18 (118 aa).

Belongs to the universal ribosomal protein uL18 family. In terms of assembly, part of the 50S ribosomal subunit; part of the 5S rRNA/L5/L18/L25 subcomplex. Contacts the 5S and 23S rRNAs.

This is one of the proteins that bind and probably mediate the attachment of the 5S RNA into the large ribosomal subunit, where it forms part of the central protuberance. The sequence is that of Large ribosomal subunit protein uL18 from Campylobacter hominis (strain ATCC BAA-381 / DSM 21671 / CCUG 45161 / LMG 19568 / NCTC 13146 / CH001A).